We begin with the raw amino-acid sequence, 164 residues long: Glutaredoxin-2, mitochondrial (164 aa).

A mitochondrion-targeting transit peptide spans 1–19 (MIWRRAALAGTRLVWSRSG). Serine 20 is modified (phosphoserine). A Glutaredoxin domain is found at 57–157 (VNQIQETISD…PLVHQCYLKK (101 aa)). Residue cysteine 68 coordinates [2Fe-2S] cluster. Residue lysine 74 participates in glutathione binding. An S-glutathionyl cysteine; alternate modification is found at cysteine 77. A disulfide bond links cysteine 77 and cysteine 80. Glutathione-binding residues include glutamine 109 and valine 121. Residue cysteine 153 coordinates [2Fe-2S] cluster.

This sequence belongs to the glutaredoxin family. Monomer; active form. Homodimer; inactive form. The homodimer is probably linked by 1 2Fe-2S cluster. Widely expressed. Expressed in brain, heart, skeletal muscle, colon, thymus, spleen, kidney, liver, small intestine, placenta and lung. Not expressed in peripheral blood leukocytes.

Its subcellular location is the mitochondrion. The protein localises to the nucleus. With respect to regulation, the 2Fe-2S present in the homodimer leads to inactivation of the enzyme. The 2Fe-2S may serve as a redox sensor: the presence of one-electron oxidants or reductants leading to the loss of the 2Fe-2S cluster, subsequent monomerization and activation of the enzyme. Unlike other glutaredoxins, it is not inhibited by oxidation of structural Cys residues. In terms of biological role, glutathione-dependent oxidoreductase that facilitates the maintenance of mitochondrial redox homeostasis upon induction of apoptosis by oxidative stress. Involved in response to hydrogen peroxide and regulation of apoptosis caused by oxidative stress. Acts as a very efficient catalyst of monothiol reactions because of its high affinity for protein glutathione-mixed disulfides. Can receive electrons not only from glutathione (GSH), but also from thioredoxin reductase supporting both monothiol and dithiol reactions. Efficiently catalyzes both glutathionylation and deglutathionylation of mitochondrial complex I, which in turn regulates the superoxide production by the complex. Overexpression decreases the susceptibility to apoptosis and prevents loss of cardiolipin and cytochrome c release. The chain is Glutaredoxin-2, mitochondrial (GLRX2) from Homo sapiens (Human).